We begin with the raw amino-acid sequence, 358 residues long: Methionine import ATP-binding protein MetN (358 aa).

One can recognise an ABC transporter domain in the interval 2–247 (ITTTGLTKVY…PGSELAHELF (246 aa)). 38–45 (GQSGAGKS) lines the ATP pocket.

Belongs to the ABC transporter superfamily. Methionine importer (TC 3.A.1.24) family. The complex is composed of two ATP-binding proteins (MetN), two transmembrane proteins (MetI) and a solute-binding protein (MetQ).

It is found in the cell membrane. It catalyses the reaction L-methionine(out) + ATP + H2O = L-methionine(in) + ADP + phosphate + H(+). The catalysed reaction is D-methionine(out) + ATP + H2O = D-methionine(in) + ADP + phosphate + H(+). Part of the ABC transporter complex MetNIQ involved in methionine import. Responsible for energy coupling to the transport system. The sequence is that of Methionine import ATP-binding protein MetN from Streptomyces griseus.